The primary structure comprises 600 residues: MNDLKRSLSEAAAAAFQAAGLPPEFGRVTASDRPDLADFQCNGALAAAKSAKRNPREIAVQVVDILKGDPRLASVEIAGVGFINMRVSDEALSARAREIASDDRTGAQLLETPRRVLIDYAGPNVAKPMHVGHLRASIIGESVKRLYRFRGDDVVGDAHFGDWGFQMGLLISAIMDEDPFINALMEKLPEAPRGFSSADEAKVMAEFEKRITLADLDRIYPAASVRQKEDPAFKERARKATAELQNGRFGYRLLWRHFVNVSRVALEREFHALGVDFDLWKGESDVNDLIEPMVLQLEAKGLLVQDQGARIVRVAREGDKRDVPPLLVVSSEGSAMYGTTDLATILDRRKSFDPHLILYCVDQRQADHFETVFRAAYLAGYAEEGALEHIGFGTMNGADGKPFKTRAGGVLKLHDLIEMAREKARERLREAGLGAELSEEQFEDTAHKVGVAALKFADLQNFRGTSYVFDLDRFTSFEGKTGPYLLYQSVRIKSVLRRAAESGAVAGRVEIHEPAERDLAMLLDAFEGALQEAYDKKAPNFVAEHAYKLAQSFSKFYAACPIMSADTETLRASRLTLAETTLRQLELALDLLGIEAPERM.

Positions Pro123 to His133 match the 'HIGH' region motif.

The protein belongs to the class-I aminoacyl-tRNA synthetase family. In terms of assembly, monomer.

It is found in the cytoplasm. The catalysed reaction is tRNA(Arg) + L-arginine + ATP = L-arginyl-tRNA(Arg) + AMP + diphosphate. The chain is Arginine--tRNA ligase from Caulobacter vibrioides (strain NA1000 / CB15N) (Caulobacter crescentus).